We begin with the raw amino-acid sequence, 722 residues long: Serine/threonine-protein kinase dkf-1 (722 aa).

2 consecutive Phorbol-ester/DAG-type zinc fingers follow at residues 98 to 148 (PHVV…RNNC) and 186 to 236 (PHTL…ASNC). One can recognise a PH domain in the interval 279–407 (KKLEGWMMHF…QFIKESLQPP (129 aa)). A Protein kinase domain is found at 426–685 (VLSDKTLGSG…IEQCLDHGWL (260 aa)). Residues 432–440 (LGSGQFGTV) and K455 each bind ATP. The Proton acceptor role is filled by D551. Residue T588 is modified to Phosphothreonine.

The protein belongs to the protein kinase superfamily. CAMK Ser/Thr protein kinase family. PKD subfamily. It depends on Mg(2+) as a cofactor. Post-translationally, prolonged phosphorylation at Thr-588 results in ubiquitination and degradation. As to expression, highly expressed in embryos and at lower levels through the four larval stages in adults. Present in a region bounded by the anterior and posterior bulbs of the pharynx and an area of the tail containing the lumbar, dorsorectal and pre-anal ganglia. Expressed in neurons.

It is found in the cytoplasm. It localises to the membrane. The catalysed reaction is L-seryl-[protein] + ATP = O-phospho-L-seryl-[protein] + ADP + H(+). It catalyses the reaction L-threonyl-[protein] + ATP = O-phospho-L-threonyl-[protein] + ADP + H(+). With respect to regulation, activated by DAG and phorbol esters. Phorbol-ester/DAG-type domain 1 binds phorbol ester with high affinity and mediates accumulation at the cell periphery. Phorbol-ester/DAG-type domain 2 binds phorbol ester with low affinity but may mediate initial contact, resulting in a conformational change allowing previously occluded domain 1 to anchor the kinase. Phosphorylation on Thr-588 is then also required for activation and may also result in a further conformational change. Its function is as follows. Converts transient diacylglycerol (DAG) signals into prolonged physiological effects, independently of PKC. Role in the regulation of growth and neuromuscular control of movement. Involved in immune response to S.aureus bacterium by activating transcription factor hlh-30 downstream of phospholipase plc-1. The protein is Serine/threonine-protein kinase dkf-1 (dkf-1) of Caenorhabditis elegans.